A 382-amino-acid chain; its full sequence is tRNA(Met) cytidine acetate ligase (382 aa).

Residues 7 to 20, glycine 100, asparagine 153, and arginine 178 contribute to the ATP site; that span reads ITEY…HVYH.

It belongs to the TmcAL family.

The protein localises to the cytoplasm. It carries out the reaction cytidine(34) in elongator tRNA(Met) + acetate + ATP = N(4)-acetylcytidine(34) in elongator tRNA(Met) + AMP + diphosphate. Functionally, catalyzes the formation of N(4)-acetylcytidine (ac(4)C) at the wobble position of elongator tRNA(Met), using acetate and ATP as substrates. First activates an acetate ion to form acetyladenylate (Ac-AMP) and then transfers the acetyl group to tRNA to form ac(4)C34. The polypeptide is tRNA(Met) cytidine acetate ligase (Staphylococcus carnosus (strain TM300)).